Reading from the N-terminus, the 104-residue chain is Alpha-amylase inhibitor HOE-467A (104 aa).

The signal sequence occupies residues 1-30; it reads MRVRALRLAALVGAGAALALSPLAAGPASA. 2 cysteine pairs are disulfide-bonded: cysteine 41–cysteine 57 and cysteine 75–cysteine 103.

Functionally, inhibits mammalian alpha-amylases specifically but has no action on plant and microbial alpha-amylases. Forms a tight stoichiometric 1:1 complex with alpha-amylase. This is Alpha-amylase inhibitor HOE-467A from Streptomyces tendae.